The sequence spans 873 residues: Leucine--tRNA ligase (873 aa).

The short motif at 48–58 is the 'HIGH' region element; sequence PYPSGKLHMGH. Residues 636–640 carry the 'KMSKS' region motif; sequence KMSKS. An ATP-binding site is contributed by Lys639.

Belongs to the class-I aminoacyl-tRNA synthetase family.

It localises to the cytoplasm. The catalysed reaction is tRNA(Leu) + L-leucine + ATP = L-leucyl-tRNA(Leu) + AMP + diphosphate. This chain is Leucine--tRNA ligase, found in Cupriavidus metallidurans (strain ATCC 43123 / DSM 2839 / NBRC 102507 / CH34) (Ralstonia metallidurans).